The primary structure comprises 457 residues: Siroheme synthase 2 (457 aa).

Residues 1–204 are precorrin-2 dehydrogenase /sirohydrochlorin ferrochelatase; it reads MDHLPIFCQL…DDRQAVADTT (204 aa). NAD(+) contacts are provided by residues 22–23 and 43–44; these read DV and LD. At serine 128 the chain carries Phosphoserine. Residues 216–457 form a uroporphyrinogen-III C-methyltransferase region; it reads GEVVLVGAGP…RDKLNWFSNH (242 aa). Proline 225 is an S-adenosyl-L-methionine binding site. The active-site Proton acceptor is aspartate 248. The Proton donor role is filled by lysine 270. S-adenosyl-L-methionine contacts are provided by residues 301 to 303, isoleucine 306, 331 to 332, methionine 382, and glycine 411; these read GGD and TA.

In the N-terminal section; belongs to the precorrin-2 dehydrogenase / sirohydrochlorin ferrochelatase family. The protein in the C-terminal section; belongs to the precorrin methyltransferase family.

The enzyme catalyses uroporphyrinogen III + 2 S-adenosyl-L-methionine = precorrin-2 + 2 S-adenosyl-L-homocysteine + H(+). It catalyses the reaction precorrin-2 + NAD(+) = sirohydrochlorin + NADH + 2 H(+). The catalysed reaction is siroheme + 2 H(+) = sirohydrochlorin + Fe(2+). It functions in the pathway cofactor biosynthesis; adenosylcobalamin biosynthesis; precorrin-2 from uroporphyrinogen III: step 1/1. It participates in cofactor biosynthesis; adenosylcobalamin biosynthesis; sirohydrochlorin from precorrin-2: step 1/1. Its pathway is porphyrin-containing compound metabolism; siroheme biosynthesis; precorrin-2 from uroporphyrinogen III: step 1/1. The protein operates within porphyrin-containing compound metabolism; siroheme biosynthesis; siroheme from sirohydrochlorin: step 1/1. It functions in the pathway porphyrin-containing compound metabolism; siroheme biosynthesis; sirohydrochlorin from precorrin-2: step 1/1. Functionally, multifunctional enzyme that catalyzes the SAM-dependent methylations of uroporphyrinogen III at position C-2 and C-7 to form precorrin-2 via precorrin-1. Then it catalyzes the NAD-dependent ring dehydrogenation of precorrin-2 to yield sirohydrochlorin. Finally, it catalyzes the ferrochelation of sirohydrochlorin to yield siroheme. The chain is Siroheme synthase 2 from Klebsiella pneumoniae subsp. pneumoniae (strain ATCC 700721 / MGH 78578).